A 1014-amino-acid polypeptide reads, in one-letter code: Isoleucine--tRNA ligase (1014 aa).

The 'HIGH' region signature appears at 48–58 (PTANGRPGIHH). The short motif at 628–632 (KMSKS) is the 'KMSKS' region element. Position 631 (K631) interacts with ATP.

The protein belongs to the class-I aminoacyl-tRNA synthetase family. IleS type 2 subfamily. In terms of assembly, monomer. Zn(2+) is required as a cofactor.

The protein localises to the cytoplasm. The enzyme catalyses tRNA(Ile) + L-isoleucine + ATP = L-isoleucyl-tRNA(Ile) + AMP + diphosphate. In terms of biological role, catalyzes the attachment of isoleucine to tRNA(Ile). As IleRS can inadvertently accommodate and process structurally similar amino acids such as valine, to avoid such errors it has two additional distinct tRNA(Ile)-dependent editing activities. One activity is designated as 'pretransfer' editing and involves the hydrolysis of activated Val-AMP. The other activity is designated 'posttransfer' editing and involves deacylation of mischarged Val-tRNA(Ile). In Dehalococcoides mccartyi (strain CBDB1), this protein is Isoleucine--tRNA ligase.